The chain runs to 412 residues: Isocitrate dehydrogenase [NADP] cytoplasmic (412 aa).

NADP(+) contacts are provided by residues 75–77 (TIT) and arginine 82. Threonine 77 is a substrate binding site. Substrate-binding positions include 94–100 (SPNGTIR), arginine 109, and arginine 132. Residue aspartate 252 participates in Mn(2+) binding. Position 260 (lysine 260) interacts with NADP(+). A Mn(2+)-binding site is contributed by aspartate 275. NADP(+)-binding positions include 310–315 (GTVTRH) and asparagine 328.

This sequence belongs to the isocitrate and isopropylmalate dehydrogenases family. As to quaternary structure, homodimer. The cofactor is Mg(2+). Requires Mn(2+) as cofactor. The N-terminus is blocked.

The protein localises to the cytoplasm. The catalysed reaction is D-threo-isocitrate + NADP(+) = 2-oxoglutarate + CO2 + NADPH. Its activity is regulated as follows. By catabolite repression. Its function is as follows. May function in the production of NADPH for fatty acid and sterol synthesis. This chain is Isocitrate dehydrogenase [NADP] cytoplasmic (IDP2), found in Saccharomyces cerevisiae (strain ATCC 204508 / S288c) (Baker's yeast).